The sequence spans 222 residues: Phosphoribosylformylglycinamidine synthase subunit PurQ (222 aa).

The Glutamine amidotransferase type-1 domain maps to 3–222 (AAVVVFPGSN…RALSGLLTDA (220 aa)). C86 serves as the catalytic Nucleophile. Residues H194 and E196 contribute to the active site.

Part of the FGAM synthase complex composed of 1 PurL, 1 PurQ and 2 PurS subunits.

Its subcellular location is the cytoplasm. The enzyme catalyses N(2)-formyl-N(1)-(5-phospho-beta-D-ribosyl)glycinamide + L-glutamine + ATP + H2O = 2-formamido-N(1)-(5-O-phospho-beta-D-ribosyl)acetamidine + L-glutamate + ADP + phosphate + H(+). The catalysed reaction is L-glutamine + H2O = L-glutamate + NH4(+). Its pathway is purine metabolism; IMP biosynthesis via de novo pathway; 5-amino-1-(5-phospho-D-ribosyl)imidazole from N(2)-formyl-N(1)-(5-phospho-D-ribosyl)glycinamide: step 1/2. Part of the phosphoribosylformylglycinamidine synthase complex involved in the purines biosynthetic pathway. Catalyzes the ATP-dependent conversion of formylglycinamide ribonucleotide (FGAR) and glutamine to yield formylglycinamidine ribonucleotide (FGAM) and glutamate. The FGAM synthase complex is composed of three subunits. PurQ produces an ammonia molecule by converting glutamine to glutamate. PurL transfers the ammonia molecule to FGAR to form FGAM in an ATP-dependent manner. PurS interacts with PurQ and PurL and is thought to assist in the transfer of the ammonia molecule from PurQ to PurL. The protein is Phosphoribosylformylglycinamidine synthase subunit PurQ of Ruegeria sp. (strain TM1040) (Silicibacter sp.).